Here is a 275-residue protein sequence, read N- to C-terminus: Large ribosomal subunit protein uL2 (275 aa).

Residues 225 to 275 are disordered; it reads MNPIDHPHGGGEGRTSGGRHPVTPWGKPTKGKKTRSNKKTDRLIMRRRQTQ.

It belongs to the universal ribosomal protein uL2 family. In terms of assembly, part of the 50S ribosomal subunit. Forms a bridge to the 30S subunit in the 70S ribosome.

One of the primary rRNA binding proteins. Required for association of the 30S and 50S subunits to form the 70S ribosome, for tRNA binding and peptide bond formation. It has been suggested to have peptidyltransferase activity; this is somewhat controversial. Makes several contacts with the 16S rRNA in the 70S ribosome. This chain is Large ribosomal subunit protein uL2, found in Paramagnetospirillum magneticum (strain ATCC 700264 / AMB-1) (Magnetospirillum magneticum).